Reading from the N-terminus, the 402-residue chain is Type II NADH:quinone oxidoreductase (402 aa).

FAD is bound by residues 12 to 16, 39 to 40, and V83; these read GAGYA and NK. E172 is a catalytic residue. FAD is bound by residues D302, 319-320, and K379; that span reads AQ.

The protein belongs to the NADH dehydrogenase family. As to quaternary structure, homodimer in solution. Forms homotetramers; dimer of dimers. Requires FAD as cofactor.

It is found in the cell membrane. The enzyme catalyses a quinone + NADH + H(+) = a quinol + NAD(+). It catalyses the reaction a menaquinone + NADH + H(+) = a menaquinol + NAD(+). It carries out the reaction a ubiquinone + NADH + H(+) = a ubiquinol + NAD(+). Inhibited by HQNO, a quinone derivative. Functionally, alternative, nonproton pumping NADH:quinone oxidoreductase that delivers electrons to the respiratory chain by oxidation of NADH and reduction of quinones, and contributes to the regeneration of NAD(+). Can use DMN, a menaquinone analog, 2,3-dimethoxy-5,6-dimethyl-benzoquinone (DDB), an ubiquinone analog, or 2,3,5,6-tetramethyl-1,4-benzoquinone (Duroquinone, DQ) a plastoquinone analog as electron acceptors. The sequence is that of Type II NADH:quinone oxidoreductase from Staphylococcus aureus (strain NCTC 8325 / PS 47).